We begin with the raw amino-acid sequence, 197 residues long: RING-H2 finger protein ATL80 (197 aa).

A helical transmembrane segment spans residues 30–50 (LVVILAALLCALICVLGLIAV). The segment at 111–153 (CAICLAEFSAGDELRVLPQCGHGFHVACIDTWLGSHSSCPSCR) adopts an RING-type; atypical zinc-finger fold. The segment at 168–197 (PGSSSSGLESEPEIEIRIKQGEDDPNSFLP) is disordered.

The protein belongs to the RING-type zinc finger family. ATL subfamily.

The protein localises to the membrane. The catalysed reaction is S-ubiquitinyl-[E2 ubiquitin-conjugating enzyme]-L-cysteine + [acceptor protein]-L-lysine = [E2 ubiquitin-conjugating enzyme]-L-cysteine + N(6)-ubiquitinyl-[acceptor protein]-L-lysine.. It participates in protein modification; protein ubiquitination. Its function is as follows. May be involved in the early steps of the plant defense signaling pathway. This Arabidopsis thaliana (Mouse-ear cress) protein is RING-H2 finger protein ATL80 (ATL80).